The chain runs to 230 residues: MASLGVQLVGYILGLLGLLGTSIAMLLPNWRTSSYVGASIVTAVGFSKGLWMECATHSTGITQCDIYSTLLGLPADIQAAQAMMVTSSAMSSLACIISVVGMRCTVFCQDSRAKDRVAVVGGVFFILGGILGFIPVAWNLHGILRDFYSPLVPDSMKFEIGEALYLGIISALFSLVAGVILCFSCSPQGNRTNYYDGYQAQPLATRSSPRSAQQPKAKSEFNSYSLTGYV.

Residues 1–7 lie on the Cytoplasmic side of the membrane; that stretch reads MASLGVQ. A helical membrane pass occupies residues 8–28; the sequence is LVGYILGLLGLLGTSIAMLLP. Over 29 to 81 the chain is Extracellular; that stretch reads NWRTSSYVGASIVTAVGFSKGLWMECATHSTGITQCDIYSTLLGLPADIQAAQ. An intrachain disulfide couples cysteine 54 to cysteine 64. The helical transmembrane segment at 82 to 102 threads the bilayer; the sequence is AMMVTSSAMSSLACIISVVGM. At 103–116 the chain is on the cytoplasmic side; it reads RCTVFCQDSRAKDR. Residues 117-137 form a helical membrane-spanning segment; the sequence is VAVVGGVFFILGGILGFIPVA. The Extracellular segment spans residues 138–162; sequence WNLHGILRDFYSPLVPDSMKFEIGE. A helical transmembrane segment spans residues 163–183; sequence ALYLGIISALFSLVAGVILCF. Residues 184–230 lie on the Cytoplasmic side of the membrane; the sequence is SCSPQGNRTNYYDGYQAQPLATRSSPRSAQQPKAKSEFNSYSLTGYV. The tract at residues 205-230 is disordered; sequence TRSSPRSAQQPKAKSEFNSYSLTGYV. Lysine 218 participates in a covalent cross-link: Glycyl lysine isopeptide (Lys-Gly) (interchain with G-Cter in SUMO). Phosphoserine is present on residues serine 219 and serine 223. Residues 229–230 are interactions with TJP1, TJP2 and TJP3; it reads YV.

Belongs to the claudin family. Can form homo- and heteropolymers with other claudins to mediate paracellular barrier and channel functions of tight junctions in response to physiological stimuli. Homopolymers interact with CLDN3, but not CLDN1, homopolymers. Directly interacts with TJP1/ZO-1, TJP2/ZO-2 and TJP3/ZO-3. Post-translationally, the disulfide bond is necessary for pore formation, but is not required for correct protein trafficking. As to expression, expressed in the kidney, liver and intestine, with higher levels in the ileum than in the jejunum. Low levels in the brain. Expressed in colonic epithelium (at protein level). Expressed in the perivenous regions, bile ducts, and gallbladder epithelium (at protein level).

The protein resides in the cell junction. It localises to the tight junction. It is found in the cell membrane. The catalysed reaction is Na(+)(in) = Na(+)(out). The enzyme catalyses K(+)(in) = K(+)(out). It catalyses the reaction Rb(+)(in) = Rb(+)(out). It carries out the reaction Li(+)(in) = Li(+)(out). The catalysed reaction is Cs(+)(in) = Cs(+)(out). The enzyme catalyses Ca(2+)(in) = Ca(2+)(out). It catalyses the reaction methylamine(out) = methylamine(in). It carries out the reaction choline(out) = choline(in). The catalysed reaction is H2O(in) = H2O(out). The channel permeability is down-regulated at acidic pH. In terms of biological role, forms paracellular channels: polymerizes in tight junction strands with cation- and water-selective channels through the strands, conveying epithelial permeability in a process known as paracellular tight junction permeability. In intestinal epithelium, allows for sodium and water fluxes from the peritoneal side to the lumen of the intestine to regulate nutrient absorption and clear enteric pathogens as part of mucosal immune response. In kidney, allows passive sodium and calcium reabsorption across proximal tubules from the lumen back to the bloodstream. In the hepatobiliary tract, allows paracellular water and cation fluxes in the hepatic perivenous areas and biliary epithelium to generate bile flow and maintain osmotic gradients. The sequence is that of Claudin-2 from Mus musculus (Mouse).